The following is a 657-amino-acid chain: Putative serine protease (657 aa).

The next 3 helical transmembrane spans lie at 4–24 (YLAT…LLMP), 46–62 (WLLT…PSGT), and 109–131 (LLSG…VLML). A Peptidase S39 domain is found at 239 to 434 (QPGSDFVECE…ETDRYARTME (196 aa)). Catalysis depends on for protease activity residues His284, Asp318, and Ser386. Residues 513-605 (PLGGLPISNG…PPSTGSVPKS (93 aa)) are disordered. A compositionally biased stretch (basic residues) spans 548–559 (HTRRRRRNKKKS). The segment covering 560–569 (KNSETGHGPE) has biased composition (basic and acidic residues). The span at 571–589 (QSQQQSRPSSPIPDDSAPV) shows a compositional bias: low complexity.

This sequence belongs to the peptidase S39B family.

It is found in the host membrane. Putative serine protease. The chain is Putative serine protease from Mushroom bacilliform virus (isolate Australia/AUS LF-1) (MBV).